A 352-amino-acid polypeptide reads, in one-letter code: Quinolinate synthase (352 aa).

Residues His48 and Ser69 each coordinate iminosuccinate. A [4Fe-4S] cluster-binding site is contributed by Cys114. Iminosuccinate is bound by residues Tyr140–Asn142 and Ser157. A [4Fe-4S] cluster-binding site is contributed by Cys201. Iminosuccinate is bound by residues His227–Glu229 and Thr244. Residue Cys298 participates in [4Fe-4S] cluster binding.

Belongs to the quinolinate synthase family. Type 1 subfamily. [4Fe-4S] cluster serves as cofactor.

It is found in the cytoplasm. The catalysed reaction is iminosuccinate + dihydroxyacetone phosphate = quinolinate + phosphate + 2 H2O + H(+). The protein operates within cofactor biosynthesis; NAD(+) biosynthesis; quinolinate from iminoaspartate: step 1/1. Functionally, catalyzes the condensation of iminoaspartate with dihydroxyacetone phosphate to form quinolinate. The chain is Quinolinate synthase from Pseudomonas putida (strain GB-1).